The following is a 298-amino-acid chain: Ethylmalonyl-CoA decarboxylase (298 aa).

It belongs to the enoyl-CoA hydratase/isomerase family.

Its subcellular location is the cytoplasm. The protein localises to the cytosol. It carries out the reaction (2S)-ethylmalonyl-CoA + H(+) = butanoyl-CoA + CO2. It catalyses the reaction (S)-methylmalonyl-CoA + H(+) = propanoyl-CoA + CO2. The catalysed reaction is (2R)-ethylmalonyl-CoA + H(+) = butanoyl-CoA + CO2. Decarboxylates ethylmalonyl-CoA, a potentially toxic metabolite, to form butyryl-CoA, suggesting it might be involved in metabolite proofreading. Acts preferentially on (S)-ethylmalonyl-CoA but also has some activity on the (R)-isomer. Also has methylmalonyl-CoA decarboxylase activity at lower level. The sequence is that of Ethylmalonyl-CoA decarboxylase (ECHDC1) from Gallus gallus (Chicken).